The chain runs to 345 residues: NADH-quinone oxidoreductase subunit 8 (345 aa).

Helical transmembrane passes span 15–35 (MLLQ…FMVY), 82–102 (FVYF…FVVI), 115–135 (VGIL…IMGG), 161–181 (LGLI…TAIV), 190–210 (LLNW…VSAL), 240–262 (YLLF…SLLF), 278–298 (WWMV…KAIV), and 309–329 (IGWK…AILA).

This sequence belongs to the complex I subunit 1 family. As to quaternary structure, NDH-1 is composed of at least 14 different subunits, Nqo1 to Nqo14. The complex has a L-shaped structure, with the hydrophobic arm (subunits Nqo7, Nqo8, Nqo10 to Nqo14) embedded in the inner membrane and the hydrophilic peripheral arm (subunits Nqo1 to Nqo6, Nqo9) protruding into the bacterial cytoplasm. The hydrophilic domain contains all the redox centers.

It localises to the cell inner membrane. It catalyses the reaction a quinone + NADH + 5 H(+)(in) = a quinol + NAD(+) + 4 H(+)(out). Functionally, NDH-1 shuttles electrons from NADH, via FMN and iron-sulfur (Fe-S) centers, to quinones in the respiratory chain. The immediate electron acceptor for the enzyme in this species is believed to be ubiquinone. Couples the redox reaction to proton translocation (for every two electrons transferred, four hydrogen ions are translocated across the cytoplasmic membrane), and thus conserves the redox energy in a proton gradient. In Paracoccus denitrificans, this protein is NADH-quinone oxidoreductase subunit 8.